A 274-amino-acid chain; its full sequence is Putative phosphoenolpyruvate synthase regulatory protein (274 aa).

Residue 157-164 coordinates ADP; that stretch reads GVSRCGKT.

The protein belongs to the pyruvate, phosphate/water dikinase regulatory protein family. PSRP subfamily.

The enzyme catalyses [pyruvate, water dikinase] + ADP = [pyruvate, water dikinase]-phosphate + AMP + H(+). It catalyses the reaction [pyruvate, water dikinase]-phosphate + phosphate + H(+) = [pyruvate, water dikinase] + diphosphate. Its function is as follows. Bifunctional serine/threonine kinase and phosphorylase involved in the regulation of the phosphoenolpyruvate synthase (PEPS) by catalyzing its phosphorylation/dephosphorylation. In Bordetella avium (strain 197N), this protein is Putative phosphoenolpyruvate synthase regulatory protein.